A 245-amino-acid chain; its full sequence is 1-(5-phosphoribosyl)-5-[(5-phosphoribosylamino)methylideneamino] imidazole-4-carboxamide isomerase (245 aa).

The active-site Proton acceptor is the D7. D129 functions as the Proton donor in the catalytic mechanism.

The protein belongs to the HisA/HisF family.

The protein resides in the cytoplasm. The catalysed reaction is 1-(5-phospho-beta-D-ribosyl)-5-[(5-phospho-beta-D-ribosylamino)methylideneamino]imidazole-4-carboxamide = 5-[(5-phospho-1-deoxy-D-ribulos-1-ylimino)methylamino]-1-(5-phospho-beta-D-ribosyl)imidazole-4-carboxamide. It functions in the pathway amino-acid biosynthesis; L-histidine biosynthesis; L-histidine from 5-phospho-alpha-D-ribose 1-diphosphate: step 4/9. The chain is 1-(5-phosphoribosyl)-5-[(5-phosphoribosylamino)methylideneamino] imidazole-4-carboxamide isomerase from Yersinia pestis bv. Antiqua (strain Antiqua).